The following is a 420-amino-acid chain: UPF0053 protein HI_0107 (420 aa).

Residues D2–P190 enclose the CNNM transmembrane domain. 4 consecutive transmembrane segments (helical) span residues S3–F23, F65–G85, A92–F112, and F126–M146. CBS domains lie at M208–F268 and L273–S333.

This sequence belongs to the UPF0053 family.

It is found in the cell membrane. The polypeptide is UPF0053 protein HI_0107 (Haemophilus influenzae (strain ATCC 51907 / DSM 11121 / KW20 / Rd)).